Reading from the N-terminus, the 102-residue chain is Nucleoid-associated protein WIGBR5260 (102 aa).

It belongs to the YbaB/EbfC family. In terms of assembly, homodimer.

The protein resides in the cytoplasm. Its subcellular location is the nucleoid. Its function is as follows. Binds to DNA and alters its conformation. May be involved in regulation of gene expression, nucleoid organization and DNA protection. This is Nucleoid-associated protein WIGBR5260 from Wigglesworthia glossinidia brevipalpis.